The sequence spans 240 residues: Ribosomal RNA small subunit methyltransferase G (240 aa).

S-adenosyl-L-methionine-binding positions include Gly-78, Phe-83, 129 to 130 (AE), and Arg-147. The interval 218–240 (RRQTSKKYPRKPGTPNKSPLLEN) is disordered.

The protein belongs to the methyltransferase superfamily. RNA methyltransferase RsmG family.

It is found in the cytoplasm. Functionally, specifically methylates the N7 position of guanine in position 535 of 16S rRNA. This chain is Ribosomal RNA small subunit methyltransferase G, found in Staphylococcus haemolyticus (strain JCSC1435).